The primary structure comprises 502 residues: MDIKVHFHDFSHVRIDCEESTFHELRDFFSFEADGYRFNPRFRYGNWDGRIRLLDYNRLLPFGLVGQIKKFCDNFGYKAWIDPQINEKEELSRKDFDEWLSKLEIYSGNKRIEPHWYQKDAVFEGLVNRRRILNLPTSAGKSLIQALLARYYLENYEGKILIIVPTTALTTQMADDFVDYRLFSHAMIKKIGGGASKDDKYKNDAPVVVGTWQTVVKQPKEWFSQFGMMMNDECHLATGKSISSIISGLNNCMFKFGLSGSLRDGKANIMQYVGMFGEIFKPVTTSKLMEDGQVTELKINSIFLRYPDEFTTKLKGKTYQEEIKIITGLSKRNKWIAKLAIKLAQKDENAFVMFKHVSHGKAIFDLIKNEYDKVYYVSGEVDTETRNIMKTLAENGKGIIIVASYGVFSTGISVKNLHHVVLAHGVKSKIIVLQTIGRVLRKHGSKTIATVWDLIDSAGVKPKSANTKKKYVHLNYLLKHGIDRIQRYADEKFNYVMKTVNL.

Residues 122-280 (VFEGLVNRRR…QYVGMFGEIF (159 aa)) enclose the Helicase ATP-binding domain. 135-142 (LPTSAGKS) is an ATP binding site. The DEAH box motif lies at 232-235 (DECH). The 167-residue stretch at 335–501 (WIAKLAIKLA…KFNYVMKTVN (167 aa)) folds into the Helicase C-terminal domain.

In terms of assembly, probably interacts with UvsW.1. Interacts with gp32. Requires Mg(2+) as cofactor.

It carries out the reaction Couples ATP hydrolysis with the unwinding of duplex DNA by translocating in the 3'-5' direction.. The catalysed reaction is ATP + H2O = ADP + phosphate + H(+). Its activity is regulated as follows. Unwinding activity is strongly stimulated by single-stranded binding protein gp32, the ssDNA annealing activity is partially inhibited by gp32 and strongly inhibited by ATP-gamma-S. Another study did not find gp32 stimulation of helicase activity. Holliday junction (HJ) branch migration is inhibited by ATP-gamma-S. Functionally, plays important roles in recombination-dependent DNA repair and the reorganization of stalled replication forks during viral DNA synthesis. Active on in vivo-derived T4 DNA; viral DNA is highly modified by hydroxymethylation and glucosylation of cytosine residues. Helps process Holliday junction (HJ) intermediates to mature products by catalyzing branch migration. Probably able to catalyze replication fork regression. Unwinds HJ and Y-branched but not linear double-stranded (ds)DNA; unwinding requires ATP and Mg(2+). Unwinds dsDNA with a 3'-single-stranded (ss)DNA overhang, suggesting it is a 3'-5' helicase. Another study does not find this activity. Unwinds D- and R-loops. Also anneals ssDNA; ATP stimulates annealing. Has ssDNA and dsDNA-stimulated ATPase activity, also hydrolyzes GTP in the presence of DNA. This chain is ATP-dependent DNA helicase uvsW, found in Enterobacteria phage T4 (Bacteriophage T4).